Reading from the N-terminus, the 166-residue chain is Large ribosomal subunit protein uL10 (166 aa).

The protein belongs to the universal ribosomal protein uL10 family. In terms of assembly, part of the ribosomal stalk of the 50S ribosomal subunit. The N-terminus interacts with L11 and the large rRNA to form the base of the stalk. The C-terminus forms an elongated spine to which L12 dimers bind in a sequential fashion forming a multimeric L10(L12)X complex.

Functionally, forms part of the ribosomal stalk, playing a central role in the interaction of the ribosome with GTP-bound translation factors. The chain is Large ribosomal subunit protein uL10 from Neisseria gonorrhoeae (strain ATCC 700825 / FA 1090).